The primary structure comprises 376 residues: UDP-N-acetylglucosamine--N-acetylmuramyl-(pentapeptide) pyrophosphoryl-undecaprenol N-acetylglucosamine transferase (376 aa).

UDP-N-acetyl-alpha-D-glucosamine is bound by residues 12-14 (TGG), N125, R165, S197, and Q296.

Belongs to the glycosyltransferase 28 family. MurG subfamily.

It localises to the cell inner membrane. It carries out the reaction di-trans,octa-cis-undecaprenyl diphospho-N-acetyl-alpha-D-muramoyl-L-alanyl-D-glutamyl-meso-2,6-diaminopimeloyl-D-alanyl-D-alanine + UDP-N-acetyl-alpha-D-glucosamine = di-trans,octa-cis-undecaprenyl diphospho-[N-acetyl-alpha-D-glucosaminyl-(1-&gt;4)]-N-acetyl-alpha-D-muramoyl-L-alanyl-D-glutamyl-meso-2,6-diaminopimeloyl-D-alanyl-D-alanine + UDP + H(+). The protein operates within cell wall biogenesis; peptidoglycan biosynthesis. Functionally, cell wall formation. Catalyzes the transfer of a GlcNAc subunit on undecaprenyl-pyrophosphoryl-MurNAc-pentapeptide (lipid intermediate I) to form undecaprenyl-pyrophosphoryl-MurNAc-(pentapeptide)GlcNAc (lipid intermediate II). The chain is UDP-N-acetylglucosamine--N-acetylmuramyl-(pentapeptide) pyrophosphoryl-undecaprenol N-acetylglucosamine transferase from Protochlamydia amoebophila (strain UWE25).